The following is a 379-amino-acid chain: Cytochrome b (379 aa).

The next 4 helical transmembrane spans lie at 33 to 53 (FGSLLGMCLMIQILTGLFLAM), 77 to 98 (WLIRYLHANGASMFFICLFIHV), 113 to 133 (WNIGIILFLTTMATAFVGYVL), and 178 to 198 (FFAFHFILPFIITAFALVHLL). Positions 83 and 97 each coordinate heme b. Residues His-182 and His-196 each contribute to the heme b site. His-201 is a binding site for a ubiquinone. The next 4 helical transmembrane spans lie at 226-246 (TKDLLGIFLLLLVLMILALFF), 288-308 (LGGVLALVLSILILAAFPLLN), 320-340 (ITQVIYWIFIXNLLVLTWIGG), and 347-367 (XTMIGQIASITYFAIIIILIP).

This sequence belongs to the cytochrome b family. As to quaternary structure, the cytochrome bc1 complex contains 11 subunits: 3 respiratory subunits (MT-CYB, CYC1 and UQCRFS1), 2 core proteins (UQCRC1 and UQCRC2) and 6 low-molecular weight proteins (UQCRH/QCR6, UQCRB/QCR7, UQCRQ/QCR8, UQCR10/QCR9, UQCR11/QCR10 and a cleavage product of UQCRFS1). This cytochrome bc1 complex then forms a dimer. The cofactor is heme b.

It is found in the mitochondrion inner membrane. Component of the ubiquinol-cytochrome c reductase complex (complex III or cytochrome b-c1 complex) that is part of the mitochondrial respiratory chain. The b-c1 complex mediates electron transfer from ubiquinol to cytochrome c. Contributes to the generation of a proton gradient across the mitochondrial membrane that is then used for ATP synthesis. This Akodon boliviensis (Bolivian grass mouse) protein is Cytochrome b (MT-CYB).